A 382-amino-acid chain; its full sequence is MSTWLLPENIADVLPSEARKIEELRRRLLDRFRSYGYEMVMPPLLEYLESLLTSGGADLRLRTFKLVDQLSGRTLGLRADITPQVARIDAHLLNRQGVTRLCYAGHVMHTRPRGLHATREQIQIGAEIYGHAGLEADLEIQQLMLDALHLAGLSRIRLDLGHAGVLAALLARDAQAAERGESLYDALSGKDVPLLNELTDDLGADTRAALRALPHLYGDASVLAEARTRLPVLPEITRALDDLAQLAAQAKGAEVAIDLGDLRGYAYHSGAMFSAYIDGVPNAIARGGRYDHVGQAYGRARPATGFSLDLRELARISPVEARGTAILAPWAQDDALSAAVAALRDAGEVVIQALPGHDHVLDEFACDRSLVERNGAWVVEPR.

This sequence belongs to the class-II aminoacyl-tRNA synthetase family. HisZ subfamily. As to quaternary structure, heteromultimer composed of HisG and HisZ subunits.

Its subcellular location is the cytoplasm. Its pathway is amino-acid biosynthesis; L-histidine biosynthesis; L-histidine from 5-phospho-alpha-D-ribose 1-diphosphate: step 1/9. Required for the first step of histidine biosynthesis. May allow the feedback regulation of ATP phosphoribosyltransferase activity by histidine. This chain is ATP phosphoribosyltransferase regulatory subunit, found in Burkholderia lata (strain ATCC 17760 / DSM 23089 / LMG 22485 / NCIMB 9086 / R18194 / 383).